Here is a 443-residue protein sequence, read N- to C-terminus: Exodeoxyribonuclease 7 large subunit (443 aa).

The protein belongs to the XseA family. As to quaternary structure, heterooligomer composed of large and small subunits.

The protein resides in the cytoplasm. It carries out the reaction Exonucleolytic cleavage in either 5'- to 3'- or 3'- to 5'-direction to yield nucleoside 5'-phosphates.. Functionally, bidirectionally degrades single-stranded DNA into large acid-insoluble oligonucleotides, which are then degraded further into small acid-soluble oligonucleotides. The chain is Exodeoxyribonuclease 7 large subunit from Vibrio parahaemolyticus serotype O3:K6 (strain RIMD 2210633).